Reading from the N-terminus, the 345-residue chain is 3-isopropylmalate dehydrogenase (345 aa).

74-87 provides a ligand contact to NAD(+); that stretch reads GPKWDGLPRKISPE. The substrate site is built by Arg94, Arg104, Arg132, and Asp217. Residues Asp217, Asp241, and Asp245 each coordinate Mg(2+). 274–286 contacts NAD(+); the sequence is GSAPDIAGKGIAN.

Belongs to the isocitrate and isopropylmalate dehydrogenases family. LeuB type 1 subfamily. In terms of assembly, homodimer. Mg(2+) serves as cofactor. Requires Mn(2+) as cofactor.

It is found in the cytoplasm. The catalysed reaction is (2R,3S)-3-isopropylmalate + NAD(+) = 4-methyl-2-oxopentanoate + CO2 + NADH. The protein operates within amino-acid biosynthesis; L-leucine biosynthesis; L-leucine from 3-methyl-2-oxobutanoate: step 3/4. In terms of biological role, catalyzes the oxidation of 3-carboxy-2-hydroxy-4-methylpentanoate (3-isopropylmalate) to 3-carboxy-4-methyl-2-oxopentanoate. The product decarboxylates to 4-methyl-2 oxopentanoate. The polypeptide is 3-isopropylmalate dehydrogenase (leuB) (Thermus thermophilus).